The sequence spans 875 residues: Alanine--tRNA ligase (875 aa).

The Zn(2+) site is built by histidine 564, histidine 568, cysteine 666, and histidine 670.

It belongs to the class-II aminoacyl-tRNA synthetase family. In terms of assembly, homotetramer. The cofactor is Zn(2+).

It localises to the cytoplasm. The catalysed reaction is tRNA(Ala) + L-alanine + ATP = L-alanyl-tRNA(Ala) + AMP + diphosphate. In terms of biological role, catalyzes the attachment of alanine to tRNA(Ala) in a two-step reaction: alanine is first activated by ATP to form Ala-AMP and then transferred to the acceptor end of tRNA(Ala). Also edits incorrectly charged Ser-tRNA(Ala) and Gly-tRNA(Ala) via its editing domain. The sequence is that of Alanine--tRNA ligase from Enterobacter sp. (strain 638).